A 251-amino-acid polypeptide reads, in one-letter code: Putative integrase/recombinase y4eF (251 aa).

The Core-binding (CB) domain occupies 1 to 40 (MLGREDIRTYQVYLANEKKLAPGSIHIALSALRFFFNVTL). Positions 58 to 231 (KLPIILSPDE…ATNKVCATES (174 aa)) constitute a Tyr recombinase domain. Active-site residues include Arg93, Lys118, His183, Arg186, and His209. Catalysis depends on Tyr218, which acts as the O-(3'-phospho-DNA)-tyrosine intermediate.

This sequence belongs to the 'phage' integrase family.

In Sinorhizobium fredii (strain NBRC 101917 / NGR234), this protein is Putative integrase/recombinase y4eF.